We begin with the raw amino-acid sequence, 612 residues long: Zinc metalloproteinase-disintegrin-like HV1 (612 aa).

A signal peptide spans 1-20 (MIQVLLVTICLAVFPYQGSS). Residues 21–188 (IILESGNVND…SIKEDSQSNL (168 aa)) constitute a propeptide that is removed on maturation. The 197-residue stretch at 200-396 (KYVKFFLVAD…NMPQCILKKP (197 aa)) folds into the Peptidase M12B domain. Residue asparagine 219 is glycosylated (N-linked (GlcNAc...) asparagine). 3 disulfides stabilise this stretch: cysteine 311/cysteine 391, cysteine 351/cysteine 375, and cysteine 353/cysteine 358. Histidine 336 is a binding site for Zn(2+). Glutamate 337 is a catalytic residue. Zn(2+) contacts are provided by histidine 340 and histidine 346. The Disintegrin domain maps to 404–489 (PPVCGNYFVE…AECTDRFQRN (86 aa)). Ca(2+) is bound by residues valine 406, asparagine 409, phenylalanine 411, glutamate 413, glutamate 416, and aspartate 419. Disulfide bonds link cysteine 407–cysteine 436, cysteine 418–cysteine 431, cysteine 420–cysteine 426, cysteine 430–cysteine 453, cysteine 444–cysteine 450, cysteine 449–cysteine 475, cysteine 462–cysteine 482, cysteine 469–cysteine 500, cysteine 493–cysteine 505, cysteine 512–cysteine 562, cysteine 527–cysteine 573, cysteine 540–cysteine 550, cysteine 557–cysteine 599, and cysteine 593–cysteine 605. The short motif at 468-470 (ECD) is the D/ECD-tripeptide element. Positions 470, 471, 473, 484, and 485 each coordinate Ca(2+). Residue asparagine 502 is glycosylated (N-linked (GlcNAc...) asparagine). Asparagine 609 carries N-linked (GlcNAc...) asparagine glycosylation.

It belongs to the venom metalloproteinase (M12B) family. P-III subfamily. P-IIIc sub-subfamily. Homodimer; disulfide-linked. It depends on Zn(2+) as a cofactor. In terms of tissue distribution, expressed by the venom gland.

The protein localises to the secreted. Inhibited by EDTA and EGTA. In terms of biological role, snake venom zinc metalloproteinase-disintegrin-like that potently activates prothrombin (F2). Does not elicit any hemorrhagic response. Barely inhibits collagen-induced platelet aggregation. Hydrolyzes the alpha-chain of fibrin and fibrinogen (FGA), without affecting the Bbeta- and gamma-chains. Induces apoptosis in cultured vascular endothelial cells. The protein is Zinc metalloproteinase-disintegrin-like HV1 of Protobothrops flavoviridis (Habu).